The primary structure comprises 258 residues: Heat-labile enterotoxin A chain (258 aa).

A signal peptide spans 1-18; the sequence is MKNITFIFFILLASPLYA. 25-39 contributes to the NAD(+) binding site; that stretch reads RADSRPPDEIKRSGG. Glu128 is an active-site residue. Cysteines 205 and 217 form a disulfide.

The protein belongs to the enterotoxin A family. Heterohexamer of one A chain and of five B chains.

Its function is as follows. The biological activity of the toxin is produced by the A chain, which activates intracellular adenyl cyclase. This chain is Heat-labile enterotoxin A chain (eltA), found in Escherichia coli O78:H11 (strain H10407 / ETEC).